A 609-amino-acid polypeptide reads, in one-letter code: Transcription factor ntnD (609 aa).

Positions 1 to 7 form a DNA-binding region, zn(2)-C6 fungal-type; it reads MCVGIEC. The tract at residues 46 to 104 is disordered; it reads FRDQNESSLNRIHNRRTSNSQPSTRSINNTTTIPASNNEPLALSQPPSASSQNQVEKDQ. Over residues 51–84 the composition is skewed to polar residues; sequence ESSLNRIHNRRTSNSQPSTRSINNTTTIPASNNE. Residues 85–97 show a composition bias toward low complexity; it reads PLALSQPPSASSQ.

This sequence belongs to the TRI10 transcription regulator family.

The protein resides in the nucleus. Its function is as follows. Transcription factor; part of the gene cluster that mediates the biosynthesis of meroterpenoids. The polypeptide is Transcription factor ntnD (Nectria sp).